Consider the following 1693-residue polypeptide: Latrophilin Cirl (1693 aa).

At 1–753 (MLPTILSISY…LFTMFDGNMR (753 aa)) the chain is on the extracellular side. The SUEL-type lectin domain maps to 25 to 114 (ACEGKKLTIE…KYLEAHYQCI (90 aa)). N142 carries an N-linked (GlcNAc...) asparagine glycan. 2 stretches are compositionally biased toward polar residues: residues 185–198 (TAVTHSTPWSSTTA) and 256–265 (NVTSPSNTRI). A disordered region spans residues 185–299 (TAVTHSTPWS…PGTAASGSVA (115 aa)). N256 carries N-linked (GlcNAc...) asparagine glycosylation. Low complexity predominate over residues 275-299 (DDGTLLTTKSSPNRPPGTAASGSVA). N301, N340, N397, N641, N689, and N716 each carry an N-linked (GlcNAc...) asparagine glycan. A disordered region spans residues 375 to 399 (YDEYDDDASSTTPAPSGGDCLHNSS). Residues 564–740 (KKSKIYSSVV…AILMDVVDEH (177 aa)) form the GAIN-B domain. Cystine bridges form between C695-C722 and C710-C724. The segment at 695-740 (CVFWNYIDHAWSANGCSLESTNRTHSVCSCNHLTNFAILMDVVDEH) is GPS. A helical transmembrane segment spans residues 754-774 (IFIYISIGICVVFIVIALLTL). Residues 775 to 787 (KLFNGVFVKSART) are Cytoplasmic-facing. A helical membrane pass occupies residues 788 to 808 (SIYTSIYLCLLAIELLFLLGI). At 809 to 814 (EQTETS) the chain is on the extracellular side. Residues 815–835 (IFCGFITIFLHCAILSGTAWF) form a helical membrane-spanning segment. Residues 836-861 (CYEAFHSYSTLTSDELLLEVDQTPKV) lie on the Cytoplasmic side of the membrane. The chain crosses the membrane as a helical span at residues 862–882 (NCYYLLSYGLSLSVVAISLVI). Topologically, residues 883–906 (DPSTYTQNDYCVLMEANALFYATF) are extracellular. A helical membrane pass occupies residues 907–927 (VVPVLVFFVAAIGYTFLSWII). The Cytoplasmic segment spans residues 928–954 (MCRKSRTGLKTKEHTRLASVRFDIRCS). The chain crosses the membrane as a helical span at residues 955 to 975 (FVFLLLLSAVWCSAYFYLRGA). The Extracellular portion of the chain corresponds to 976–985 (KMDDDTADVY). A helical transmembrane segment spans residues 986 to 1006 (GYCFICFNTLLGLYIFVFHCI). Topologically, residues 1007 to 1693 (QNEKIRREYR…VRCYLEPLAK (687 aa)) are cytoplasmic. S1142 is subject to Phosphoserine. Disordered stretches follow at residues 1156–1194 (HKQQQQQQQQGPLGESYYHQPDYYSWKQPSTGTGGLKTP), 1220–1247 (KPNSGQHGKKKRGAGGVPASPSGSLHSR), 1294–1319 (QQQLRRQQLHQQQQQLSSDEEQAEQH), 1433–1521 (GGGS…SDER), and 1601–1673 (LAVN…QQRH). Residues S1239 and S1246 each carry the phosphoserine modification. The segment covering 1294–1309 (QQQLRRQQLHQQQQQL) has biased composition (low complexity). 2 positions are modified to phosphoserine: S1310 and S1311. Residues 1439 to 1464 (GGSVSSRSQQQQLKKQQQQQSLAQQR) are compositionally biased toward low complexity. Composition is skewed to acidic residues over residues 1472-1486 (DDDDDEDEEEDEEAT) and 1496-1507 (CDEDEEEDESDL). A compositionally biased stretch (basic and acidic residues) spans 1508–1521 (EHDAHGLPPQSDER). The span at 1630-1655 (LQKLSPQSTTSSSSHTSHSNPNLHPH) shows a compositional bias: low complexity. The segment covering 1656–1672 (QLTHPHPHQHPPHHQQR) has biased composition (basic residues).

The protein belongs to the G-protein coupled receptor 2 family. LN-TM7 subfamily. As to quaternary structure, forms a heterodimer, consisting of a large extracellular region non-covalently linked to a seven-transmembrane moiety. Post-translationally, proteolytically cleaved into 2 subunits, an extracellular subunit and a seven-transmembrane subunit.

It localises to the cell membrane. The chain is Latrophilin Cirl from Drosophila sechellia (Fruit fly).